The sequence spans 366 residues: Nodulation protein NolL (366 aa).

A run of 9 helical transmembrane segments spans residues 27-47, 62-82, 98-118, 140-160, 164-184, 212-232, 253-273, 286-306, and 324-344; these read FVKGILIILVVLGHLLQLVIY, IYMFHMPLFMAISGYLASGTI, LLIPMLFWCALIETAKLAAFF, FLWAVLASFLLTKLFAAFNLL, ILCASAIVIALMPITLSIVPL, HKSLLMFSCWAVACLCFLDWG, VLLMFTGSAAAAAVAAQSLFH, LVAVELGQSTLLLYLVQGAVF, and IVVASAIGAAIFGAATAVLWI.

The protein belongs to the acyltransferase 3 family.

It is found in the cell membrane. Thought to be an acetyltransferase that modifies the fucose of the nod factor. This is Nodulation protein NolL (nolL) from Sinorhizobium fredii (strain NBRC 101917 / NGR234).